The chain runs to 630 residues: tRNA uridine 5-carboxymethylaminomethyl modification enzyme MnmG (630 aa).

13 to 18 (GGGHAG) is a binding site for FAD. Residue 273 to 287 (GPRYCPSIEDKIHRF) coordinates NAD(+).

Belongs to the MnmG family. Homodimer. Heterotetramer of two MnmE and two MnmG subunits. Requires FAD as cofactor.

It is found in the cytoplasm. In terms of biological role, NAD-binding protein involved in the addition of a carboxymethylaminomethyl (cmnm) group at the wobble position (U34) of certain tRNAs, forming tRNA-cmnm(5)s(2)U34. The polypeptide is tRNA uridine 5-carboxymethylaminomethyl modification enzyme MnmG (Pseudomonas aeruginosa (strain LESB58)).